The primary structure comprises 563 residues: Eukaryotic translation initiation factor 3 subunit D-1 (563 aa).

Residues 98-167 (VQKPPHQRGR…GPPPKMRESS (70 aa)) form a disordered region. Over residues 100–121 (KPPHQRGRFRNMRNSRSGRGRN) the composition is skewed to basic residues. The residue at position 128 (threonine 128) is a Phosphothreonine. An RNA gate region spans residues 291 to 305 (EFDLLTVNESSVEPP).

The protein belongs to the eIF-3 subunit D family. In terms of assembly, component of the eukaryotic translation initiation factor 3 (eIF-3) complex. The eIF-3 complex interacts with pix.

The protein localises to the cytoplasm. MRNA cap-binding component of the eukaryotic translation initiation factor 3 (eIF-3) complex, which is involved in protein synthesis of a specialized repertoire of mRNAs and, together with other initiation factors, stimulates binding of mRNA and methionyl-tRNAi to the 40S ribosome. The eIF-3 complex specifically targets and initiates translation of a subset of mRNAs involved in cell proliferation. In the eIF-3 complex, eif3d specifically recognizes and binds the 7-methylguanosine cap of a subset of mRNAs. In Drosophila grimshawi (Hawaiian fruit fly), this protein is Eukaryotic translation initiation factor 3 subunit D-1.